We begin with the raw amino-acid sequence, 539 residues long: uncharacterized protein (539 aa).

Leucine 6–glutamate 20 is an FAD binding site. Residues histidine 227 and arginine 243 contribute to the active site.

This sequence belongs to the FAD-dependent oxidoreductase 2 family. FRD/SDH subfamily. It depends on FAD as a cofactor.

This is an uncharacterized protein from Methanocaldococcus jannaschii (strain ATCC 43067 / DSM 2661 / JAL-1 / JCM 10045 / NBRC 100440) (Methanococcus jannaschii).